A 50-amino-acid polypeptide reads, in one-letter code: Large ribosomal subunit protein bL33B (50 aa).

It belongs to the bacterial ribosomal protein bL33 family.

The polypeptide is Large ribosomal subunit protein bL33B (Streptococcus pneumoniae (strain ATCC BAA-255 / R6)).